A 336-amino-acid polypeptide reads, in one-letter code: tRNA N6-adenosine threonylcarbamoyltransferase (336 aa).

Histidine 114 and histidine 118 together coordinate Fe cation. Substrate is bound by residues 136 to 140 (LVSGG), aspartate 169, glycine 182, aspartate 186, and asparagine 275. A Fe cation-binding site is contributed by aspartate 302.

This sequence belongs to the KAE1 / TsaD family. Requires Fe(2+) as cofactor.

The protein localises to the cytoplasm. It carries out the reaction L-threonylcarbamoyladenylate + adenosine(37) in tRNA = N(6)-L-threonylcarbamoyladenosine(37) in tRNA + AMP + H(+). Functionally, required for the formation of a threonylcarbamoyl group on adenosine at position 37 (t(6)A37) in tRNAs that read codons beginning with adenine. Is involved in the transfer of the threonylcarbamoyl moiety of threonylcarbamoyl-AMP (TC-AMP) to the N6 group of A37, together with TsaE and TsaB. TsaD likely plays a direct catalytic role in this reaction. This chain is tRNA N6-adenosine threonylcarbamoyltransferase, found in Streptococcus agalactiae serotype III (strain NEM316).